The sequence spans 239 residues: Tetratricopeptide repeat protein 9B (239 aa).

Disordered stretches follow at residues 1–57 (MQRG…LGAA) and 99–126 (QGAR…SEEQ). Phosphoserine is present on residues S7 and S27. The segment covering 16–31 (PEPPPRPPPALSPPGS) has biased composition (pro residues). A TPR 1 repeat occupies 65–99 (AVAFKAEGQRCYREKKFREAIGKYHRALLQLKAAQ). Pro residues predominate over residues 106 to 116 (LPAPAPGPTSS). A TPR 2 repeat occupies 171-204 (FKATYRAGIAFYHLGDYARALRYLQEARSREPTD).

This sequence belongs to the TTC9 family.

The chain is Tetratricopeptide repeat protein 9B (TTC9B) from Homo sapiens (Human).